A 217-amino-acid polypeptide reads, in one-letter code: NAD(P)H-quinone oxidoreductase subunit M, chloroplastic (217 aa).

A chloroplast-targeting transit peptide spans 1–21; the sequence is MVAAFSYTACTKLSLLHPSMV. The interval 48 to 67 is disordered; the sequence is ETETLKEEQSTEKMKKQPTP. Over residues 50–62 the composition is skewed to basic and acidic residues; sequence ETLKEEQSTEKMK.

Belongs to the NDH complex subunit M family. Part of the chloroplast NDH complex, composed of a mixture of chloroplast and nucleus encoded subunits. Component of the NDH subcomplex A, at least composed of ndhH, ndhI, ndhJ, ndhK, ndhL, ndhM, ndhN and ndhO.

The protein resides in the plastid. The protein localises to the chloroplast thylakoid membrane. It catalyses the reaction a plastoquinone + NADH + (n+1) H(+)(in) = a plastoquinol + NAD(+) + n H(+)(out). The catalysed reaction is a plastoquinone + NADPH + (n+1) H(+)(in) = a plastoquinol + NADP(+) + n H(+)(out). NDH shuttles electrons from NAD(P)H:plastoquinone, via FMN and iron-sulfur (Fe-S) centers, to quinones in the photosynthetic chain and possibly in a chloroplast respiratory chain. The immediate electron acceptor for the enzyme in this species is believed to be plastoquinone. Couples the redox reaction to proton translocation, and thus conserves the redox energy in a proton gradient. This is NAD(P)H-quinone oxidoreductase subunit M, chloroplastic from Arabidopsis thaliana (Mouse-ear cress).